A 177-amino-acid chain; its full sequence is MIDDDGYRPNVGIVICNRQGQVMWARRYGQHSWQFPQGGINPGESPEQAMYRELFEEVGLRKKDVRVLASTRNWLRYKLPKRLVRWDTKPVCIGQKQKWFLLQLMCNESDINMQSSGTPEFDGWRWVSYWYPVRQVVSFKRDVYRRVMKEFISPVILLQESVAARVATPPSPRRKRG.

The region spanning 6–149 (GYRPNVGIVI…KRDVYRRVMK (144 aa)) is the Nudix hydrolase domain. Positions 38–59 (GGINPGESPEQAMYRELFEEVG) match the Nudix box motif.

Belongs to the Nudix hydrolase family. RppH subfamily. A divalent metal cation serves as cofactor.

Its function is as follows. Accelerates the degradation of transcripts by removing pyrophosphate from the 5'-end of triphosphorylated RNA, leading to a more labile monophosphorylated state that can stimulate subsequent ribonuclease cleavage. This is RNA pyrophosphohydrolase from Pectobacterium atrosepticum (strain SCRI 1043 / ATCC BAA-672) (Erwinia carotovora subsp. atroseptica).